The primary structure comprises 369 residues: Dual specificity protein phosphatase 1-A (369 aa).

The Rhodanese domain occupies 21 to 138 (RAHKCLILDC…FSAQCPEFCT (118 aa)). Thr-168 carries the phosphothreonine; by MAPK1 modification. A Tyrosine-protein phosphatase domain is found at 175–316 (GPVEILPFLY…LLQFESQVLA (142 aa)). Catalysis depends on Cys-260, which acts as the Phosphocysteine intermediate.

This sequence belongs to the protein-tyrosine phosphatase family. Non-receptor class dual specificity subfamily. Post-translationally, phosphorylated by MAPK1/ERK2 at Thr-168 and at one or more serine residues in a progesterone-dependent manner. Phosphorylation reduces its rate of degradation but does not seem to affect phosphatase activity. As to expression, expressed in XIK-2 kidney cells.

Its subcellular location is the nucleus. The catalysed reaction is O-phospho-L-seryl-[protein] + H2O = L-seryl-[protein] + phosphate. The enzyme catalyses O-phospho-L-threonyl-[protein] + H2O = L-threonyl-[protein] + phosphate. It carries out the reaction O-phospho-L-tyrosyl-[protein] + H2O = L-tyrosyl-[protein] + phosphate. Dual specificity phosphatase that dephosphorylates MAP kinase MAPK1/ERK2 on both 'Thr-188' and 'Tyr-190', regulating its activity during the meiotic cell cycle. This chain is Dual specificity protein phosphatase 1-A, found in Xenopus laevis (African clawed frog).